The sequence spans 605 residues: Protein cueball (605 aa).

The signal sequence occupies residues 1–31; it reads MAYIDQKHNTFWDDFAIALRDKIVFLNSTWG. 3 N-linked (GlcNAc...) asparagine glycosylation sites follow: N27, N64, and N85. The Extracellular segment spans residues 32 to 486; it reads EIHASAHRFE…QCGPAPPVQG (455 aa). LDL-receptor class B repeat units lie at residues 53-97, 98-145, 146-190, and 191-236; these read EMIY…DPLN, RNLF…DICR, RQLY…DQLS, and DRIF…NEDA. N261 and N314 each carry an N-linked (GlcNAc...) asparagine glycan. 2 EGF-like domains span residues 322-359 and 394-431; these read EGDR…ARCE and EYHK…ERCE. Disulfide bonds link C334–C347, C349–C358, C398–C408, C402–C419, and C421–C430. N433 and N464 each carry an N-linked (GlcNAc...) asparagine glycan. The helical transmembrane segment at 487–507 threads the bilayer; sequence PLIIVIVLGLVTTSGLVALTV. Residues 508 to 605 are Cytoplasmic-facing; sequence HGVRLIYKPK…IHSMEDNLLS (98 aa).

Belongs to the cueball family.

The protein localises to the cell membrane. Its function is as follows. Has a role in spermatogenesis and oogenesis. This Drosophila grimshawi (Hawaiian fruit fly) protein is Protein cueball.